A 182-amino-acid chain; its full sequence is Putative CTD phosphatase-like protein 355R (182 aa).

The 180-residue stretch at 1–180 (MKNIFLDLDN…MRLKDVLNRH (180 aa)) folds into the FCP1 homology domain.

Belongs to the IIV-6 355R family.

Functionally, may function as a phosphatase. The polypeptide is Putative CTD phosphatase-like protein 355R (Invertebrate iridescent virus 6 (IIV-6)).